The sequence spans 410 residues: MENREVNWMKSGCKRRIELPEELLAEIVARLPFISITRFKSVCKGWRSLIESTYFRHLFVFAHRNSSSSWSLVCGTFGWSVEEMAGFYGCKRYGLPRRLGSYIPPHGLVDKHKIVACTDGLVLLQTVTKRETFSVGSPVLRQWVQLPPHPWKGISSSVLAIGLVTRVEDGVVMEYKVVCMDIDYRWEVESLILEIYSSLTGTWTRKKVRCPSLIVSLSYKRCLSLKKMLHWLDTHYRCRSSVGAIVAYDVYADDDEQQFRIIPFPDQKACFRRAYTTSGGFLVCINKIHLLLRLWRLEEYTSDSGRWQLTQEINLTSFGCDHHYFPVAMHPSETHITYMGNPEKALVSIDLKTHKLTLHTKSSAYRDTMVYHYLDTVYVSVEASFDHDVFYTPQFTLPTWMGSVPRSPSI.

The F-box domain maps to 13 to 58 (CKRRIELPEELLAEIVARLPFISITRFKSVCKGWRSLIESTYFRHL). Kelch repeat units follow at residues 177-227 (VVCM…SLKK) and 274-327 (AYTT…YFPV).

The sequence is that of Putative F-box/kelch-repeat protein At1g15680 from Arabidopsis thaliana (Mouse-ear cress).